A 22-amino-acid chain; its full sequence is Alpha-amylase inhibitor DR4 (22 aa).

The segment at 1-22 is disordered; the sequence is SGGGKEAAETFNRVESHPRPDA.

Functionally, inhibits insect alpha-amylases. In Delonix regia (Royal poinciana), this protein is Alpha-amylase inhibitor DR4.